Consider the following 128-residue polypeptide: Fluoride-specific ion channel FluC (128 aa).

4 helical membrane-spanning segments follow: residues 3–23 (LYALTAIGAGAALGAWLRWWF), 33–53 (TLPLGTLAANLTGGYLIGAAI), 69–89 (FAITGFLGGLTTFSTFSAETV), and 99–119 (WTFVIIFSHLTGSLVMTILGI). 2 residues coordinate Na(+): Gly-76 and Thr-79.

This sequence belongs to the fluoride channel Fluc/FEX (TC 1.A.43) family.

The protein localises to the cell inner membrane. The enzyme catalyses fluoride(in) = fluoride(out). With respect to regulation, na(+) is not transported, but it plays an essential structural role and its presence is essential for fluoride channel function. Its function is as follows. Fluoride-specific ion channel. Important for reducing fluoride concentration in the cell, thus reducing its toxicity. The protein is Fluoride-specific ion channel FluC of Nitrosospira multiformis (strain ATCC 25196 / NCIMB 11849 / C 71).